The sequence spans 134 residues: Large-conductance mechanosensitive channel (134 aa).

2 helical membrane-spanning segments follow: residues 16–36 (VVDMAVGIIIGVAFGKIVSSF) and 76–96 (GVFLQAIFDFIIIAFAIFIAV).

Belongs to the MscL family. In terms of assembly, homopentamer.

It is found in the cell inner membrane. Its function is as follows. Channel that opens in response to stretch forces in the membrane lipid bilayer. May participate in the regulation of osmotic pressure changes within the cell. The sequence is that of Large-conductance mechanosensitive channel from Thioalkalivibrio sulfidiphilus (strain HL-EbGR7).